The following is a 119-amino-acid chain: Hemerythrin-like protein (119 aa).

His-26, His-56, Glu-60, His-75, His-79, His-107, and Asp-112 together coordinate Fe cation.

This sequence belongs to the hemerythrin family.

Its function is as follows. Oxygen-binding protein. The oxygen-binding site contains two iron atoms. The chain is Hemerythrin-like protein (nfa1) from Naegleria fowleri (Brain eating amoeba).